The chain runs to 147 residues: SsrA-binding protein (147 aa).

This sequence belongs to the SmpB family.

It is found in the cytoplasm. In terms of biological role, required for rescue of stalled ribosomes mediated by trans-translation. Binds to transfer-messenger RNA (tmRNA), required for stable association of tmRNA with ribosomes. tmRNA and SmpB together mimic tRNA shape, replacing the anticodon stem-loop with SmpB. tmRNA is encoded by the ssrA gene; the 2 termini fold to resemble tRNA(Ala) and it encodes a 'tag peptide', a short internal open reading frame. During trans-translation Ala-aminoacylated tmRNA acts like a tRNA, entering the A-site of stalled ribosomes, displacing the stalled mRNA. The ribosome then switches to translate the ORF on the tmRNA; the nascent peptide is terminated with the 'tag peptide' encoded by the tmRNA and targeted for degradation. The ribosome is freed to recommence translation, which seems to be the essential function of trans-translation. The polypeptide is SsrA-binding protein (Thermosipho melanesiensis (strain DSM 12029 / CIP 104789 / BI429)).